The sequence spans 275 residues: NH(3)-dependent NAD(+) synthetase (275 aa).

46–53 serves as a coordination point for ATP; that stretch reads GISGGQDS. Position 52 (Asp-52) interacts with Mg(2+). A deamido-NAD(+)-binding site is contributed by Arg-140. Thr-160 is a binding site for ATP. Glu-165 contacts Mg(2+). Residues Lys-173 and Asp-180 each coordinate deamido-NAD(+). Residues Lys-189 and Thr-211 each coordinate ATP. Position 260–261 (260–261) interacts with deamido-NAD(+); it reads HK.

It belongs to the NAD synthetase family. In terms of assembly, homodimer.

It carries out the reaction deamido-NAD(+) + NH4(+) + ATP = AMP + diphosphate + NAD(+) + H(+). The protein operates within cofactor biosynthesis; NAD(+) biosynthesis; NAD(+) from deamido-NAD(+) (ammonia route): step 1/1. In terms of biological role, catalyzes the ATP-dependent amidation of deamido-NAD to form NAD. Uses ammonia as a nitrogen source. The polypeptide is NH(3)-dependent NAD(+) synthetase (Salmonella agona (strain SL483)).